Here is a 1147-residue protein sequence, read N- to C-terminus: Myosin heavy chain IB (1147 aa).

One can recognise a Myosin motor domain in the interval 9 to 677; that stretch reads RGVDDLVLMP…TLFHLEECLD (669 aa). An ATP-binding site is contributed by 103–110; it reads GESGAGKT. Ser315 is subject to Phosphoserine. An actin-binding region spans residues 551–573; sequence CDALMEALSRCSPHYIRCIKPND. Residues 715–900 enclose the TH1 domain; it reads KERQRHSVNR…RANIQIGIAT (186 aa). Disordered regions lie at residues 901-954 and 969-1089; these read GLPK…YSQP and AAVP…APAA. Composition is skewed to gly residues over residues 916-951 and 975-1079; these read SGGG…GGGY and GRGG…GAGR. One can recognise an SH3 domain in the interval 1090–1147; that stretch reads PAKPQVKALYDYDAQTGDELTFKEGDTIIVHQKDPAGWWEGELNGKRGWVPANYVQDI.

It belongs to the TRAFAC class myosin-kinesin ATPase superfamily. Myosin family. In terms of assembly, myosin I heavy chain is single-headed. Dimer of a heavy and a light chain. Inability to self-assemble into filaments.

Functionally, myosin is a protein that binds to F-actin and has ATPase activity that is activated by F-actin. This Acanthamoeba castellanii (Amoeba) protein is Myosin heavy chain IB (MIB).